The sequence spans 64 residues: Putative neurotoxin-G (64 aa).

A signal peptide spans 1–19 (MFAMVTVTVLLLISSGIFC). Cystine bridges form between Cys-25–Cys-45, Cys-32–Cys-54, and Cys-36–Cys-56.

In terms of tissue distribution, expressed by the venom gland.

The protein localises to the secreted. The chain is Putative neurotoxin-G from Lychas mucronatus (Chinese swimming scorpion).